Here is a 316-residue protein sequence, read N- to C-terminus: tRNA methyltransferase 10 homolog B (316 aa).

Disordered regions lie at residues 1–30 (MDCE…RDDG) and 42–98 (VEYD…DLGN). Over residues 63–82 (VQRKQRHWERIVSSKKSKRK) the composition is skewed to basic residues. Residues 75 to 96 (SSKKSKRKQERERRKIKRAEDL) adopt a coiled-coil conformation. Positions 83-95 (QERERRKIKRAED) are enriched in basic and acidic residues. Residues 113-310 (TKEKLLEAKH…KGVSPGKGYI (198 aa)) form the SAM-dependent MTase TRM10-type domain.

It belongs to the class IV-like SAM-binding methyltransferase superfamily. TRM10 family.

It catalyses the reaction guanosine(9) in tRNA + S-adenosyl-L-methionine = N(1)-methylguanosine(9) in tRNA + S-adenosyl-L-homocysteine + H(+). Its function is as follows. S-adenosyl-L-methionine-dependent guanine N(1)-methyltransferase that catalyzes the formation of N(1)-methylguanine at position 9 (m1G9) in tRNAs. Probably not able to catalyze formation of N(1)-methyladenine at position 9 (m1A9) in tRNAs. This is tRNA methyltransferase 10 homolog B (Trmt10b) from Rattus norvegicus (Rat).